The sequence spans 270 residues: Formamidopyrimidine-DNA glycosylase (270 aa).

The active-site Schiff-base intermediate with DNA is P2. Catalysis depends on E3, which acts as the Proton donor. The active-site Proton donor; for beta-elimination activity is the K58. DNA-binding residues include H91, R110, and R151. The FPG-type zinc-finger motif lies at 236–270 (FVYGRGGEFCKVCGSTLREIRLGQRASVYCPRCQR). R260 (proton donor; for delta-elimination activity) is an active-site residue.

The protein belongs to the FPG family. In terms of assembly, monomer. The cofactor is Zn(2+).

It carries out the reaction Hydrolysis of DNA containing ring-opened 7-methylguanine residues, releasing 2,6-diamino-4-hydroxy-5-(N-methyl)formamidopyrimidine.. It catalyses the reaction 2'-deoxyribonucleotide-(2'-deoxyribose 5'-phosphate)-2'-deoxyribonucleotide-DNA = a 3'-end 2'-deoxyribonucleotide-(2,3-dehydro-2,3-deoxyribose 5'-phosphate)-DNA + a 5'-end 5'-phospho-2'-deoxyribonucleoside-DNA + H(+). Functionally, involved in base excision repair of DNA damaged by oxidation or by mutagenic agents. Acts as a DNA glycosylase that recognizes and removes damaged bases. Has a preference for oxidized purines, such as 7,8-dihydro-8-oxoguanine (8-oxoG). Has AP (apurinic/apyrimidinic) lyase activity and introduces nicks in the DNA strand. Cleaves the DNA backbone by beta-delta elimination to generate a single-strand break at the site of the removed base with both 3'- and 5'-phosphates. This is Formamidopyrimidine-DNA glycosylase from Pseudomonas paraeruginosa (strain DSM 24068 / PA7) (Pseudomonas aeruginosa (strain PA7)).